A 622-amino-acid polypeptide reads, in one-letter code: Chaperone protein HscA homolog (622 aa).

It belongs to the heat shock protein 70 family.

Functionally, chaperone involved in the maturation of iron-sulfur cluster-containing proteins. Has a low intrinsic ATPase activity which is markedly stimulated by HscB. The polypeptide is Chaperone protein HscA homolog (Delftia acidovorans (strain DSM 14801 / SPH-1)).